We begin with the raw amino-acid sequence, 532 residues long: UDP-N-acetylmuramoylalanine--D-glutamate ligase (532 aa).

124–130 lines the ATP pocket; that stretch reads GSKGKSS.

Belongs to the MurCDEF family.

It is found in the cytoplasm. The catalysed reaction is UDP-N-acetyl-alpha-D-muramoyl-L-alanine + D-glutamate + ATP = UDP-N-acetyl-alpha-D-muramoyl-L-alanyl-D-glutamate + ADP + phosphate + H(+). Its pathway is cell wall biogenesis; peptidoglycan biosynthesis. Functionally, cell wall formation. Catalyzes the addition of glutamate to the nucleotide precursor UDP-N-acetylmuramoyl-L-alanine (UMA). The polypeptide is UDP-N-acetylmuramoylalanine--D-glutamate ligase (murD) (Treponema pallidum (strain Nichols)).